A 714-amino-acid polypeptide reads, in one-letter code: Protein BLISTER (714 aa).

Disordered stretches follow at residues Met1–Ser113, Ser219–Arg261, Val288–Tyr325, and Met519–Thr576. The span at Arg8–Lys33 shows a compositional bias: basic and acidic residues. 2 stretches are compositionally biased toward polar residues: residues Ser36–Ile50 and Ser58–Glu74. A compositionally biased stretch (basic and acidic residues) spans Asp92–Asp102. 4 stretches are compositionally biased toward polar residues: residues Ser219 to Ser253, Val288 to Gly297, Asn313 to Ala322, and Met519 to Gln561. A coiled-coil region spans residues Asn356–Ser525. Low complexity predominate over residues Glu562–Thr576.

Interacts with CLF. Expressed in root tips, emerging lateral roots, shoot apical meristem (SAM), vasculature of cotyledons, leaves, sepals and carpels.

It localises to the nucleus. Its subcellular location is the cytoplasm. Its function is as follows. Is required for normal leaf, flower and seed development and controls cotyledon and leaf patterning by inhibiting premature differentiation. Regulates the expression of a subset of PcG target genes. Is required for the repression of the floral specific genes PI, SEP2, and SEP3, but also for the activation of FLC. Involved in response to cold. Involved in the regulation of COR15A, COR15B, BAM3 and AMY3 transcripts, and ascorbate levels in response to prolonged chilling temperatures. In Arabidopsis thaliana (Mouse-ear cress), this protein is Protein BLISTER.